The sequence spans 460 residues: Receptor-like cytosolic serine/threonine-protein kinase RBK2 (460 aa).

The segment at 1-67 (MNSASAHDLR…DADTDVQCKN (67 aa)) is disordered. Residues 7 to 23 (HDLRLLEVDKEKQDPKS) are compositionally biased toward basic and acidic residues. The region spanning 143–415 (FSPENIIGRG…VELLLGHEDV (273 aa)) is the Protein kinase domain. ATP contacts are provided by residues 149–157 (IGRGGYADV) and Lys171. Asp267 serves as the catalytic Proton acceptor. The residue at position 307 (Thr307) is a Phosphothreonine. A Phosphotyrosine modification is found at Tyr315.

It belongs to the protein kinase superfamily. Ser/Thr protein kinase family. Interacts with ARAC5 and ARAC10.

It localises to the cytoplasm. It carries out the reaction L-seryl-[protein] + ATP = O-phospho-L-seryl-[protein] + ADP + H(+). The enzyme catalyses L-threonyl-[protein] + ATP = O-phospho-L-threonyl-[protein] + ADP + H(+). The protein is Receptor-like cytosolic serine/threonine-protein kinase RBK2 (RBK2) of Arabidopsis thaliana (Mouse-ear cress).